A 381-amino-acid polypeptide reads, in one-letter code: L-lactate dehydrogenase (381 aa).

Positions 1-380 (MIISSANDYR…TRDALVDLSK (380 aa)) constitute an FMN hydroxy acid dehydrogenase domain. Substrate is bound at residue Tyr24. FMN contacts are provided by Ser106 and Gln127. A substrate-binding site is contributed by Tyr129. An FMN-binding site is contributed by Thr155. Substrate is bound at residue Arg164. Lys251 is a binding site for FMN. His275 (proton acceptor) is an active-site residue. Residue Arg278 participates in substrate binding. 306-330 (DSGIRNGLDIVRMLALGADATMLGR) contributes to the FMN binding site.

It belongs to the FMN-dependent alpha-hydroxy acid dehydrogenase family. FMN is required as a cofactor.

The protein resides in the cell inner membrane. The catalysed reaction is (S)-lactate + A = pyruvate + AH2. Its function is as follows. Catalyzes the conversion of L-lactate to pyruvate. Is coupled to the respiratory chain. The sequence is that of L-lactate dehydrogenase from Actinobacillus pleuropneumoniae serotype 5b (strain L20).